A 201-amino-acid chain; its full sequence is tRNA (guanine-N(7)-)-methyltransferase (201 aa).

Glutamate 33, glutamate 58, aspartate 85, and aspartate 108 together coordinate S-adenosyl-L-methionine. Aspartate 108 is a catalytic residue. The substrate site is built by lysine 112 and aspartate 144.

Belongs to the class I-like SAM-binding methyltransferase superfamily. TrmB family.

It catalyses the reaction guanosine(46) in tRNA + S-adenosyl-L-methionine = N(7)-methylguanosine(46) in tRNA + S-adenosyl-L-homocysteine. It participates in tRNA modification; N(7)-methylguanine-tRNA biosynthesis. In terms of biological role, catalyzes the formation of N(7)-methylguanine at position 46 (m7G46) in tRNA. In Anaeromyxobacter dehalogenans (strain 2CP-C), this protein is tRNA (guanine-N(7)-)-methyltransferase.